Consider the following 507-residue polypeptide: Bifunctional purine biosynthesis protein PurH (507 aa).

One can recognise an MGS-like domain in the interval 1–144 (MKRALLSVSD…KNSDSVWAVV (144 aa)).

This sequence belongs to the PurH family.

It catalyses the reaction (6R)-10-formyltetrahydrofolate + 5-amino-1-(5-phospho-beta-D-ribosyl)imidazole-4-carboxamide = 5-formamido-1-(5-phospho-D-ribosyl)imidazole-4-carboxamide + (6S)-5,6,7,8-tetrahydrofolate. The catalysed reaction is IMP + H2O = 5-formamido-1-(5-phospho-D-ribosyl)imidazole-4-carboxamide. The protein operates within purine metabolism; IMP biosynthesis via de novo pathway; 5-formamido-1-(5-phospho-D-ribosyl)imidazole-4-carboxamide from 5-amino-1-(5-phospho-D-ribosyl)imidazole-4-carboxamide (10-formyl THF route): step 1/1. Its pathway is purine metabolism; IMP biosynthesis via de novo pathway; IMP from 5-formamido-1-(5-phospho-D-ribosyl)imidazole-4-carboxamide: step 1/1. This Lacticaseibacillus paracasei (strain ATCC 334 / BCRC 17002 / CCUG 31169 / CIP 107868 / KCTC 3260 / NRRL B-441) (Lactobacillus paracasei) protein is Bifunctional purine biosynthesis protein PurH.